A 476-amino-acid chain; its full sequence is Bifunctional protein HldE (476 aa).

The interval 1 to 318 is ribokinase; sequence MKVTLPDFRR…ENAIRGRAET (318 aa). 195–198 is an ATP binding site; it reads NLSE. The active site involves D264. The interval 344-476 is cytidylyltransferase; the sequence is MTNGIFDILH…IIQSIKNGRG (133 aa).

In the N-terminal section; belongs to the carbohydrate kinase PfkB family. This sequence in the C-terminal section; belongs to the cytidylyltransferase family. Homodimer.

It catalyses the reaction D-glycero-beta-D-manno-heptose 7-phosphate + ATP = D-glycero-beta-D-manno-heptose 1,7-bisphosphate + ADP + H(+). It carries out the reaction D-glycero-beta-D-manno-heptose 1-phosphate + ATP + H(+) = ADP-D-glycero-beta-D-manno-heptose + diphosphate. It functions in the pathway nucleotide-sugar biosynthesis; ADP-L-glycero-beta-D-manno-heptose biosynthesis; ADP-L-glycero-beta-D-manno-heptose from D-glycero-beta-D-manno-heptose 7-phosphate: step 1/4. Its pathway is nucleotide-sugar biosynthesis; ADP-L-glycero-beta-D-manno-heptose biosynthesis; ADP-L-glycero-beta-D-manno-heptose from D-glycero-beta-D-manno-heptose 7-phosphate: step 3/4. Catalyzes the phosphorylation of D-glycero-D-manno-heptose 7-phosphate at the C-1 position to selectively form D-glycero-beta-D-manno-heptose-1,7-bisphosphate. In terms of biological role, catalyzes the ADP transfer from ATP to D-glycero-beta-D-manno-heptose 1-phosphate, yielding ADP-D-glycero-beta-D-manno-heptose. This is Bifunctional protein HldE from Yersinia pestis bv. Antiqua (strain Antiqua).